A 316-amino-acid polypeptide reads, in one-letter code: Transcription initiation factor IIB (316 aa).

The TFIIB-type zinc finger occupies 11 to 42 (PRVTCPNHPDAILVEDYRAGDMICPECGLVVG). Residues cysteine 15, histidine 18, cysteine 34, and cysteine 37 each contribute to the Zn(2+) site. Residues serine 70, serine 76, and serine 92 each carry the phosphoserine modification. A run of 2 repeats spans residues 124–200 (MADR…LILK) and 218–294 (FCSN…LIYP). DNA contacts are provided by lysine 152, arginine 154, lysine 189, and lysine 196. The tract at residues 189 to 193 (KEIGR) is core promoter DNA-binding. Position 238 is an N6-acetyllysine; by autocatalysis (lysine 238). The tract at residues 244–316 (LVPGRSPISV…DTPVDKLPQL (73 aa)) is necessary for TATA box-bound complex TBP formation. A DNA-binding site is contributed by arginine 248. The segment at 249 to 252 (SPIS) is core promoter DNA-binding. Positions 272, 281, 284, 286, and 290 each coordinate DNA. A core promoter DNA-binding region spans residues 283–286 (VTIR).

It belongs to the TFIIB family. In terms of assembly, found in a ternary complex with TATA box-bound TBP. Part of a TFIID-containing RNA polymerase II pre-initiation complex (PIC) that is composed of TBP and at least GTF2A1, GTF2A2, GTF2E1, GTF2E2, GTF2F1, GTF2H2, GTF2H3, GTF2H4, GTF2H5, GTF2B, TCEA1, ERCC2, ERCC3, TAF1, TAF2, TAF3, TAF4, TAF5, TAF6, TAF7, TAF8, TAF9, TAF10, TAF11, TAF12 and TAF13. Associates with TFIID-TFIIA (DA complex) to form TFIID-TFIIA-TFIIB (DAB complex), which is then recognized by RNA polymerase II (Pol II). Found in a RNA polymerase II initiation complex. Interacts (via C-terminus) with TBP; this interaction with TATA box-bound TBP guides Pol II into the PIC. Interacts (via N-terminus) with Pol II. Interacts (via C-terminus) with SSU72; this interaction is inhibited by SYMPK. Interacts with NR2F1; this interaction is direct. Interacts with PGR. Interacts with ESR1. Interacts with GTF2F1 (via C-terminus and preferentially via acetylated form); this interaction prevents binding of GTF2B to GTF2F2. Interacts with GTF2F2 (via N-terminus); this interaction is inhibited in presence of GTF2F1. Interacts with the transcription elongation factor TCEA2. Interacts with HSF1 (via transactivation domain). Interacts with GPBP1. Post-translationally, acetylated. Autoacetylated; autoacetylation at Lys-238 stimulates transcription activation.

The protein localises to the nucleus. The protein resides in the chromosome. The enzyme catalyses L-lysyl-[protein] + acetyl-CoA = N(6)-acetyl-L-lysyl-[protein] + CoA + H(+). In terms of biological role, general transcription factor that plays a role in transcription initiation by RNA polymerase II (Pol II). Involved in the pre-initiation complex (PIC) formation and Pol II recruitment at promoter DNA. Together with the TATA box-bound TBP forms the core initiation complex and provides a bridge between TBP and the Pol II-TFIIF complex. Released from the PIC early following the onset of transcription during the initiation and elongation transition and reassociates with TBP during the next transcription cycle. Associates with chromatin to core promoter-specific regions. Binds to two distinct DNA core promoter consensus sequence elements in a TBP-independent manner; these IIB-recognition elements (BREs) are localized immediately upstream (BREu), 5'-[GC][GC][GA]CGCC-3', and downstream (BREd), 5'-[GA]T[TGA][TG][GT][TG][TG]-3', of the TATA box element. Modulates transcription start site selection. Also exhibits autoacetyltransferase activity that contributes to the activated transcription. The chain is Transcription initiation factor IIB from Pongo abelii (Sumatran orangutan).